The sequence spans 597 residues: Elongation factor 4 (597 aa).

One can recognise a tr-type G domain in the interval 2 to 184; that stretch reads DHIRNFSIIA…ALIAKVPPPK (183 aa). GTP is bound by residues 14–19 and 131–134; these read DHGKST and NKID.

This sequence belongs to the TRAFAC class translation factor GTPase superfamily. Classic translation factor GTPase family. LepA subfamily.

It is found in the cell inner membrane. It carries out the reaction GTP + H2O = GDP + phosphate + H(+). Functionally, required for accurate and efficient protein synthesis under certain stress conditions. May act as a fidelity factor of the translation reaction, by catalyzing a one-codon backward translocation of tRNAs on improperly translocated ribosomes. Back-translocation proceeds from a post-translocation (POST) complex to a pre-translocation (PRE) complex, thus giving elongation factor G a second chance to translocate the tRNAs correctly. Binds to ribosomes in a GTP-dependent manner. This Cupriavidus taiwanensis (strain DSM 17343 / BCRC 17206 / CCUG 44338 / CIP 107171 / LMG 19424 / R1) (Ralstonia taiwanensis (strain LMG 19424)) protein is Elongation factor 4.